The sequence spans 406 residues: FBD-associated F-box protein At1g60410 (406 aa).

The 51-residue stretch at 9-59 (KDRLSDLPCHLLCRILSNLSTKESVRTSVLSPRWSNLWSLVSVLDLDFQDF) folds into the F-box domain. The FBD domain maps to 355–405 (MEEIKLSPVPQCVLSSLDFLQLKAPSTPSKMKLATYFRKKCTRLTKMLLSG).

The polypeptide is FBD-associated F-box protein At1g60410 (Arabidopsis thaliana (Mouse-ear cress)).